The following is a 296-amino-acid chain: MACSIGNAFRCSSDTLRFAPRQQCSSRLNPNPSSFLSFNSSPILAQNLGASSSSLSRRTIRARTKMAASEASINGSNRMLVFVPPHPLIKHWISVLRNEQTPCPVFRNAIAELGRLLMYEASREWLPTVVGEIMSPMGPASVEFIDPREPIAVVPILRAGLALAEHASSVLPANKIYHLGVSRDEKTLLPSVYLNKLPDEFPKNSRVFLVDPVLATGGTIMAAMDLLKERGLSVQQIKVICAIAAPPALSKLNEKFPGLHVYAGIIDPEVNEKGYIIPGLGDAGDRSFGTETHWVK.

The transit peptide at 1–61 directs the protein to the chloroplast; that stretch reads MACSIGNAFR…SSSLSRRTIR (61 aa). Alanine 2 carries the N-acetylalanine modification. 148-151 lines the GTP pocket; that stretch reads REPI. Residues arginine 158, arginine 183, aspartate 211, 216 to 219, and aspartate 282 each bind 5-phospho-alpha-D-ribose 1-diphosphate; that span reads TGGT. 281–283 is a binding site for uracil; the sequence is GDA.

This sequence belongs to the UPRTase family. Requires Mg(2+) as cofactor.

It is found in the plastid. The protein resides in the chloroplast. The enzyme catalyses UMP + diphosphate = 5-phospho-alpha-D-ribose 1-diphosphate + uracil. Its pathway is pyrimidine metabolism; UMP biosynthesis via salvage pathway; UMP from uracil: step 1/1. Its activity is regulated as follows. Allosterically activated by GTP. Uracil phosphoribosyltransferase (UPRT) that catalyzes the conversion of uracil and 5-phospho-alpha-D-ribose 1-diphosphate (PRPP) to UMP and diphosphate. Is probably the only functional UPRT, since the dual-domain proteins of the UKL family seem to lack this activity. The chain is Uracil phosphoribosyltransferase, chloroplastic (UPP) from Arabidopsis thaliana (Mouse-ear cress).